Here is a 400-residue protein sequence, read N- to C-terminus: Acetate kinase (400 aa).

Asn-10 contacts Mg(2+). Lys-17 provides a ligand contact to ATP. Residue Arg-91 coordinates substrate. Residue Asp-150 is the Proton donor/acceptor of the active site. Residues His-210 to Gly-214, Asp-285 to Arg-287, and Gly-333 to Asn-337 each bind ATP. Mg(2+) is bound at residue Glu-387.

Belongs to the acetokinase family. In terms of assembly, homodimer. Requires Mg(2+) as cofactor. It depends on Mn(2+) as a cofactor.

The protein resides in the cytoplasm. It catalyses the reaction acetate + ATP = acetyl phosphate + ADP. It participates in metabolic intermediate biosynthesis; acetyl-CoA biosynthesis; acetyl-CoA from acetate: step 1/2. Catalyzes the formation of acetyl phosphate from acetate and ATP. Can also catalyze the reverse reaction. This chain is Acetate kinase, found in Pectobacterium atrosepticum (strain SCRI 1043 / ATCC BAA-672) (Erwinia carotovora subsp. atroseptica).